The following is a 352-amino-acid chain: tRNA N6-adenosine threonylcarbamoyltransferase (352 aa).

Residues H117 and H121 each contribute to the Fe cation site. Residues 140-144 (LVSGG), D173, G186, and N287 contribute to the substrate site. D315 is a Fe cation binding site.

This sequence belongs to the KAE1 / TsaD family. The cofactor is Fe(2+).

It localises to the cytoplasm. It carries out the reaction L-threonylcarbamoyladenylate + adenosine(37) in tRNA = N(6)-L-threonylcarbamoyladenosine(37) in tRNA + AMP + H(+). In terms of biological role, required for the formation of a threonylcarbamoyl group on adenosine at position 37 (t(6)A37) in tRNAs that read codons beginning with adenine. Is involved in the transfer of the threonylcarbamoyl moiety of threonylcarbamoyl-AMP (TC-AMP) to the N6 group of A37, together with TsaE and TsaB. TsaD likely plays a direct catalytic role in this reaction. The protein is tRNA N6-adenosine threonylcarbamoyltransferase of Psychrobacter cryohalolentis (strain ATCC BAA-1226 / DSM 17306 / VKM B-2378 / K5).